The primary structure comprises 359 residues: 4-galactosyl-N-acetylglucosaminide 3-alpha-L-fucosyltransferase 9 (359 aa).

The Cytoplasmic segment spans residues 1–11 (MTSTSKGILRP). A helical; Signal-anchor for type II membrane protein transmembrane segment spans residues 12-32 (FLIVCIILGCFMACLLIYIKP). Topologically, residues 33–359 (TNSWVFSPME…VGNLEKWFWN (327 aa)) are lumenal. A glycan (N-linked (GlcNAc...) asparagine) is linked at asparagine 62. The tract at residues 63–168 (ETTILVWVWP…RRDSDIQVPY (106 aa)) is acceptor-binding. Glutamine 75 lines the a beta-D-galactosyl-(1-&gt;4)-N-acetyl-beta-D-glucosaminyl derivative pocket. 3 disulfide bridges follow: cysteine 82–cysteine 335, cysteine 91–cysteine 338, and cysteine 190–cysteine 238. A glycan (N-linked (GlcNAc...) asparagine) is linked at asparagine 101. An a beta-D-galactosyl-(1-&gt;4)-N-acetyl-beta-D-glucosaminyl derivative-binding site is contributed by glutamate 137. Glutamate 137 functions as the Nucleophile in the catalytic mechanism. Glutamate 137 is a binding site for GDP-beta-L-fucose. The N-linked (GlcNAc...) asparagine glycan is linked to asparagine 153. Residues tyrosine 168, valine 192, serine 194, asparagine 195, arginine 202, valine 226, tyrosine 241, asparagine 246, tyrosine 252, glutamate 255, and lysine 256 each coordinate GDP-beta-L-fucose. Positions 169–326 (GFLTVSTNPF…NWRKDFTVNL (158 aa)) are donor-binding. Residues 327–359 (PRFWESHACLACDHVKRHQEYKSVGNLEKWFWN) are acceptor-binding.

This sequence belongs to the glycosyltransferase 10 family. In terms of assembly, homodimer. In terms of processing, N-glycosylated with complex-type N-glycans. Mainly detected in brain and kidney.

The protein localises to the golgi apparatus. The protein resides in the trans-Golgi network membrane. Its subcellular location is the golgi apparatus membrane. It carries out the reaction a beta-D-galactosyl-(1-&gt;4)-N-acetyl-beta-D-glucosaminyl derivative + GDP-beta-L-fucose = a beta-D-galactosyl-(1-&gt;4)-[alpha-L-fucosyl-(1-&gt;3)]-N-acetyl-beta-D-glucosaminyl derivative + GDP + H(+). The enzyme catalyses an alpha-Neu5Ac-(2-&gt;3)-beta-D-Gal-(1-&gt;4)-beta-D-GlcNAc-(1-&gt;3)-beta-D-Gal-(1-&gt;4)-beta-D-GlcNAc derivative + GDP-beta-L-fucose = an alpha-Neu5Ac-(2-&gt;3)-beta-D-Gal-(1-&gt;4)-beta-D-GlcNAc-(1-&gt;3)-beta-D-Gal-(1-&gt;4)-[alpha-L-Fuc-(1-&gt;3)]-beta-D-GlcNAc derivative + GDP + H(+). It catalyses the reaction alpha-N-glycoloylneuraminosyl-(2-&gt;3)-beta-D-galactosyl-(1-&gt;4)-N-acetyl-beta-D-glucosaminyl-(1-&gt;3)-beta-D-galactosyl-(1-&gt;4)-N-acetyl-beta-D-glucosaminyl-(1-&gt;3)-beta-D-galactosyl-(1-&gt;4)-beta-D-glucosyl-(1&lt;-&gt;1')-ceramide + GDP-beta-L-fucose = alpha-N-glycoloylneuraminosyl-(2-&gt;3)-beta-D-galactosyl-(1-&gt;4)-N-acetyl-beta-D-glucosaminyl-(1-&gt;3)-beta-D-galactosyl-(1-&gt;4)-[alpha-L-fucosyl-(1-&gt;3)]-N-acetyl-beta-D-glucosaminyl-(1-&gt;3)-beta-D-galactosyl-(1-&gt;4)-beta-D-glucosyl-(1&lt;-&gt;1')-ceramide + GDP + H(+). The catalysed reaction is alpha-D-galactosyl-(1-&gt;3)-beta-D-galactosyl-(1-&gt;4)-N-acetyl-beta-D-glucosaminyl-(1-&gt;3)-beta-D-galactosyl-(1-&gt;4)-beta-D-glucosyl-(1&lt;-&gt;1')-ceramide + GDP-beta-L-fucose = a neolactoside IV(3)-alpha-Gal,III(3)-alpha-Fuc-nLc4Cer + GDP + H(+). It carries out the reaction a neolactoside nLc4Cer + GDP-beta-L-fucose = a neolactoside III(3)-alpha-Fuc-nLc4Cer + GDP + H(+). The enzyme catalyses an N-acetyl-alpha-neuraminyl-(2-&gt;3)-beta-D-galactosyl-(1-&gt;4)-N-acetyl-beta-D-glucosaminyl derivative + GDP-beta-L-fucose = an alpha-Neu5Ac-(2-&gt;3)-beta-D-Gal-(1-&gt;4)-[alpha-L-Fuc-(1-&gt;3)]-beta-D-GlcNAc derivative + GDP + H(+). It catalyses the reaction beta-D-Gal-(1-&gt;4)-beta-D-GlcNAc-(1-&gt;3)-beta-D-Gal-(1-&gt;4)-D-Glc + GDP-beta-L-fucose = beta-D-Gal-(1-&gt;4)-[alpha-L-Fuc-(1-&gt;3)]-beta-D-GlcNAc-(1-&gt;3)-beta-D-Gal-(1-&gt;4)-D-Glc + GDP + H(+). The catalysed reaction is an alpha-L-Fuc-(1-&gt;2)-beta-D-Gal-(1-&gt;4)-beta-D-GlcNAc derivative + GDP-beta-L-fucose = an alpha-L-Fuc-(1-&gt;2)-beta-D-Gal-(1-&gt;4)-[alpha-L-Fuc-(1-&gt;3)]-beta-D-GlcNAc derivative + GDP + H(+). Its pathway is protein modification; protein glycosylation. The protein operates within glycolipid biosynthesis. With respect to regulation, activated by Mn2+. Catalyzes alpha(1-&gt;3) linkage of fucosyl moiety transferred from GDP-beta-L-fucose to N-acetyl glucosamine (GlcNAc) within type 2 lactosamine (LacNAc, beta-D-Gal-(1-&gt;4)-beta-D-GlcNAc-) glycan attached to glycolipids and N- or O-linked glycoproteins. Fucosylates distal type 2 LacNAc and its fucosylated (H-type 2 LacNAc) and sialylated (sialyl-type 2 LacNAc) derivatives to form Lewis x (Lex) (CD15) and Lewis y (Ley) antigenic epitopes involved in cell adhesion and differentiation. Generates Lex epitopes in the brain, presumably playing a role in the maintenance of neuronal stemness and neurite outgrowth in progenitor neural cells. Fucosylates the internal type 2 LacNAc unit of the polylactosamine chain to form VIM-2 antigen that serves as recognition epitope for SELE. Can also modify milk oligosaccharides in particular type 2 tetrasaccharide LNnT. This chain is 4-galactosyl-N-acetylglucosaminide 3-alpha-L-fucosyltransferase 9, found in Mus musculus (Mouse).